We begin with the raw amino-acid sequence, 278 residues long: Sulfur carrier protein FdhD (278 aa).

Cys121 functions as the Cysteine persulfide intermediate in the catalytic mechanism. A Mo-bis(molybdopterin guanine dinucleotide)-binding site is contributed by 260 to 265 (FCKPGR).

This sequence belongs to the FdhD family.

The protein localises to the cytoplasm. In terms of biological role, required for formate dehydrogenase (FDH) activity. Acts as a sulfur carrier protein that transfers sulfur from IscS to the molybdenum cofactor prior to its insertion into FDH. This chain is Sulfur carrier protein FdhD, found in Salmonella typhi.